A 46-amino-acid chain; its full sequence is MISMLRCIYLFLSVILITSYFVTPVMPCNCKAPETALCARRCQQHG.

The signal sequence occupies residues 1–27 (MISMLRCIYLFLSVILITSYFVTPVMP). 2 disulfides stabilise this stretch: Cys28/Cys38 and Cys30/Cys42. Residues 40–41 (RR) form an essential for toxin activity region. Histidine amide is present on His45.

As to expression, expressed by the venom gland.

It localises to the secreted. Its function is as follows. Toxin with unique selectivity to KCa2 channels. Potently blocks human, rat and mouse KCa2.2/KCNN2/SK2 channels (IC(50)=27-140 pM), and moderately blocks human and rat KCa2.3/KCNN3/SK3 channels (IC(50)=0.6-4 nM), and human (IC(50)=0.7-12 nM) and mouse (IC(50)=28 nM) KCa2.1/KCNN1/SK1 channels. Does not show any antimicrobial activity. In vivo, intracerebroventricular injection into rats of a dose of 1 ng results in neurodegeneration specifically in the Purkinje cells of the cerebellum, and induces seizures characterized by hypersensitivity to noise, loss of postural control, paroxystic jerking, and alternating periods of great agitation with tonic-clonic convulsions and periods of total prostration. When administered at high doses, exerts anti-inflammatory, anti-oxidative, anti-fibrotic and anti-apoptotic properties in several models of inflammatory disease, including gouty arthritis, atherosclerosis, atopic dermatitis and acute kidney injury. Down-regulates pro-inflammatory signaling pathways, such as the NF-kappaB and STAT3 pathways, probably by blocking SK channels such as KCa2.2/KCNN2/SK2 and/or KCa2.3/KCNN3/SK3 which are thought to be involved in promoting some inflammatory responses. For example in mouse and rat microglia cells, inhibits LPS-activated KCa2.2/KCNN2/SK2 channels and TLR4 expression leading to the down-regulation of the NF-kappaB, STAT, and MAPK/ERK signaling pathways and, as a consequence, decreases secretion of pro-inflammatory cytokines. This is Apamin from Apis mellifera (Honeybee).